Here is a 97-residue protein sequence, read N- to C-terminus: ESAT-6-like protein EsxA (97 aa).

Belongs to the WXG100 family. ESAT-6 subfamily. Forms a tight 1:1 complex with EsxB. Forms a complex with EccC and EsxB, probably wholly mediated by EsxB.

It is found in the secreted. In terms of biological role, may help regulate assembly and function of the type VII secretion system (T7SS). EsxA disassembles pre-formed EccC-EsxB multimers, possibly by making EccC-EsxA-EsxB trimers instead of EccC-EsxB-EsxB-EccC tetramers. The polypeptide is ESAT-6-like protein EsxA (Thermomonospora curvata (strain ATCC 19995 / DSM 43183 / JCM 3096 / KCTC 9072 / NBRC 15933 / NCIMB 10081 / Henssen B9)).